Reading from the N-terminus, the 143-residue chain is Alpha-amylase/trypsin inhibitor CM16 (143 aa).

The N-terminal stretch at 1-24 (MASKSNCVLLLAAVLVSIFAAVAA) is a signal peptide.

This sequence belongs to the protease inhibitor I6 (cereal trypsin/alpha-amylase inhibitor) family. As to quaternary structure, subunit of the tetrameric inhibitor. In terms of processing, five disulfide bonds, which are essential for the inhibitor activity, are probably present. Developing endosperm.

It is found in the secreted. Alpha-amylase/trypsin inhibitor. It could be involved in insect defense mechanisms. This is Alpha-amylase/trypsin inhibitor CM16 from Triticum aestivum (Wheat).